Consider the following 366-residue polypeptide: Cobalt-precorrin-5B C(1)-methyltransferase (366 aa).

It belongs to the CbiD family.

It catalyses the reaction Co-precorrin-5B + S-adenosyl-L-methionine = Co-precorrin-6A + S-adenosyl-L-homocysteine. The protein operates within cofactor biosynthesis; adenosylcobalamin biosynthesis; cob(II)yrinate a,c-diamide from sirohydrochlorin (anaerobic route): step 6/10. Its function is as follows. Catalyzes the methylation of C-1 in cobalt-precorrin-5B to form cobalt-precorrin-6A. In Thermus thermophilus (strain ATCC BAA-163 / DSM 7039 / HB27), this protein is Cobalt-precorrin-5B C(1)-methyltransferase.